The chain runs to 152 residues: UPF0178 protein SAS0646 (152 aa).

The protein belongs to the UPF0178 family.

This is UPF0178 protein SAS0646 from Staphylococcus aureus (strain MSSA476).